The following is a 298-amino-acid chain: Cyclin-D4-2 (298 aa).

The protein belongs to the cyclin family. Cyclin D subfamily. In terms of assembly, interacts with CDKA-1 to form a kinase complex.

Functionally, may promote cell division. This chain is Cyclin-D4-2 (CYCD4-2), found in Arabidopsis thaliana (Mouse-ear cress).